The primary structure comprises 263 residues: Ribosomal RNA large subunit methyltransferase E (263 aa).

S-adenosyl-L-methionine is bound by residues glycine 48, tryptophan 50, aspartate 68, aspartate 88, and aspartate 118. Lysine 158 serves as the catalytic Proton acceptor. In terms of domain architecture, TRAM spans proline 205 to glutamate 263.

Belongs to the class I-like SAM-binding methyltransferase superfamily. RNA methyltransferase RlmE family.

Its subcellular location is the cytoplasm. The enzyme catalyses uridine(2552) in 23S rRNA + S-adenosyl-L-methionine = 2'-O-methyluridine(2552) in 23S rRNA + S-adenosyl-L-homocysteine + H(+). Functionally, specifically methylates the uridine in position 2552 of 23S rRNA at the 2'-O position of the ribose in the fully assembled 50S ribosomal subunit. The protein is Ribosomal RNA large subunit methyltransferase E of Haloarcula marismortui (strain ATCC 43049 / DSM 3752 / JCM 8966 / VKM B-1809) (Halobacterium marismortui).